The chain runs to 126 residues: Glycine cleavage system H protein (126 aa).

Residues 21–103 (TVTIGISEHA…YDGGWIVKVK (83 aa)) enclose the Lipoyl-binding domain. N6-lipoyllysine is present on K62.

This sequence belongs to the GcvH family. As to quaternary structure, the glycine cleavage system is composed of four proteins: P, T, L and H. The cofactor is (R)-lipoate.

The glycine cleavage system catalyzes the degradation of glycine. The H protein shuttles the methylamine group of glycine from the P protein to the T protein. The chain is Glycine cleavage system H protein from Vibrio cholerae serotype O1 (strain ATCC 39541 / Classical Ogawa 395 / O395).